Reading from the N-terminus, the 365-residue chain is Chorismate synthase (365 aa).

Arginine 46 provides a ligand contact to NADP(+). Residues arginine 123–serine 125, asparagine 241–glycine 242, glycine 281, lysine 296–serine 300, and arginine 322 contribute to the FMN site.

It belongs to the chorismate synthase family. As to quaternary structure, homotetramer. FMNH2 is required as a cofactor.

It catalyses the reaction 5-O-(1-carboxyvinyl)-3-phosphoshikimate = chorismate + phosphate. The protein operates within metabolic intermediate biosynthesis; chorismate biosynthesis; chorismate from D-erythrose 4-phosphate and phosphoenolpyruvate: step 7/7. Catalyzes the anti-1,4-elimination of the C-3 phosphate and the C-6 proR hydrogen from 5-enolpyruvylshikimate-3-phosphate (EPSP) to yield chorismate, which is the branch point compound that serves as the starting substrate for the three terminal pathways of aromatic amino acid biosynthesis. This reaction introduces a second double bond into the aromatic ring system. The sequence is that of Chorismate synthase from Helicobacter pylori (strain Shi470).